An 864-amino-acid polypeptide reads, in one-letter code: N-alpha-acetyltransferase 16, NatA auxiliary subunit (864 aa).

TPR repeat units lie at residues 46 to 79 (GETLAMKGLTLNCLGKKEEAYEFVRKGLRNDVKS), 80 to 113 (HVCWHVYGLLQRSDKKYDEAIKCYRNALKLDKDN), 148 to 184 (RASWIGYAIAYHLLKDYDMALKLLEEFRQTQQVPPNK), 224 to 257 (LLVEEIKGEILLKLGRLKEASEVFKNLIDRNAEN), 374 to 407 (LWVQYFLAQHFDKLGQYSLALDYINAAIASTPTL), 409 to 441 (ELFYMKAKIYKHIGNLKEAAKWMDEAQSLDTAD), and 485 to 518 (MWFQTECISAYQRLGRYGDALKKCHEVERHFFEI). The segment at 603–638 (QKKAKLEEERKHAERERQQKNQKKKRDEEEEEASGL) is disordered. Positions 606-621 (AKLEEERKHAERERQQ) are enriched in basic and acidic residues.

As to quaternary structure, component of the N-terminal acetyltransferase A (NatA) complex composed of NAA10 and NAA16.

Auxillary subunit of the N-terminal acetyltransferase A (NatA) complex which displays alpha (N-terminal) acetyltransferase activity. In Homo sapiens (Human), this protein is N-alpha-acetyltransferase 16, NatA auxiliary subunit (NAA16).